The following is a 254-amino-acid chain: MTTPPRGPDGRPLKVRVKKSRGRTTSSQKWLQRQLNDPYVARAKREGWRSRAAFKLIEMDEKARLLKRGMRIVDLGAAPGGWSQVAAKKIGLEEGLGKIVAIDLLEIEPIPGVAFAQMDFLAPDAPERLIAMLGGQADLVMSDMAANATGHKKTDHLRIVGLVELAVEFARQVLAPGGTFLAKVIQGGMEATLLADLKRDFTQVRHVKPAASRADSAELYVLATGFRGEADRAETDDAGTDGTGTAEAQAPRDQ.

The tract at residues 1 to 28 is disordered; that stretch reads MTTPPRGPDGRPLKVRVKKSRGRTTSSQ. The span at 13–22 shows a compositional bias: basic residues; that stretch reads LKVRVKKSRG. The S-adenosyl-L-methionine site is built by glycine 80, tryptophan 82, aspartate 103, aspartate 119, and aspartate 143. Catalysis depends on lysine 183, which acts as the Proton acceptor. Residues 231-254 form a disordered region; the sequence is DRAETDDAGTDGTGTAEAQAPRDQ.

Belongs to the class I-like SAM-binding methyltransferase superfamily. RNA methyltransferase RlmE family.

Its subcellular location is the cytoplasm. The catalysed reaction is uridine(2552) in 23S rRNA + S-adenosyl-L-methionine = 2'-O-methyluridine(2552) in 23S rRNA + S-adenosyl-L-homocysteine + H(+). In terms of biological role, specifically methylates the uridine in position 2552 of 23S rRNA at the 2'-O position of the ribose in the fully assembled 50S ribosomal subunit. The chain is Ribosomal RNA large subunit methyltransferase E from Xanthobacter autotrophicus (strain ATCC BAA-1158 / Py2).